A 401-amino-acid chain; its full sequence is uncharacterized protein (401 aa).

The [4Fe-4S] cluster site is built by cysteine 7, cysteine 13, cysteine 16, and cysteine 94. S-adenosyl-L-methionine contacts are provided by glutamine 230, tyrosine 259, glutamate 280, and aspartate 328. Residue cysteine 355 is the Nucleophile of the active site.

The protein belongs to the class I-like SAM-binding methyltransferase superfamily. RNA M5U methyltransferase family.

This is an uncharacterized protein from Chlamydia caviae (strain ATCC VR-813 / DSM 19441 / 03DC25 / GPIC) (Chlamydophila caviae).